The chain runs to 592 residues: Frizzled-9 (592 aa).

The signal sequence occupies residues 1–23 (MAVPPLLRGALLLWQLLATGGAA). The Extracellular portion of the chain corresponds to 24-230 (LEIGRFDPER…EVFWSRRDKD (207 aa)). The FZ domain occupies 35-156 (RGPAPCQAME…NDPHALCMEA (122 aa)). Cystine bridges form between Cys40–Cys101, Cys48–Cys94, Cys85–Cys123, Cys112–Cys153, and Cys116–Cys140. The required for Wnt-activated receptor activity stretch occupies residues 59–173 (PNLLGHTSQG…PTEPHKGLGM (115 aa)). The helical transmembrane segment at 231–251 (FALVWMAVWSALCFFSTAFTV) threads the bilayer. The Cytoplasmic portion of the chain corresponds to 252–267 (FTFLLEPHRFQYPERP). A helical membrane pass occupies residues 268-288 (IIFLSMCYNVYSLAFLIRAVA). The Extracellular segment spans residues 289–314 (GAQSVACDQEAGALYVIQEGLENTGC). The chain crosses the membrane as a helical span at residues 315–335 (TLVFLLLYYFGMASSLWWVVL). Topologically, residues 336-356 (TLTWFLAAGKKWGHEAIEAHG) are cytoplasmic. A helical transmembrane segment spans residues 357–377 (SYFHMAAWGLPALKTIVVLTL). At 378–401 (RKVAGDELTGLCYVASMDPAALTG) the chain is on the extracellular side. Residues 402-422 (FVLVPLSCYLVLGTSFLLTGF) traverse the membrane as a helical segment. The Cytoplasmic portion of the chain corresponds to 423-448 (VALFHIRKIMKTGGTNTEKLEKLMVK). Residues 449–469 (IGVFSILYTVPATCVIVCYVY) traverse the membrane as a helical segment. Residues 470–509 (ERLNMDFWRLRATEQPCTAAAVPGGRRDCSLPGGSVPTVA) lie on the Extracellular side of the membrane. A helical transmembrane segment spans residues 510-530 (VFMLKIFMSLVVGITSGVWVW). Residues 531 to 592 (SSKTFQTWQS…DPSLENPTHL (62 aa)) are Cytoplasmic-facing. Positions 533-538 (KTFQTW) match the Lys-Thr-X-X-X-Trp motif, mediates interaction with the PDZ domain of Dvl family members motif. The required for CTNNB1 accumulation and TCF transcription factor activity stretch occupies residues 555-592 (ACRTPGGYGRGTHCHYKAPTVVLHMTKTDPSLENPTHL).

The protein belongs to the G-protein coupled receptor Fz/Smo family. In terms of processing, ubiquitinated by ZNRF3, leading to its degradation by the proteasome.

Its subcellular location is the cell membrane. In terms of biological role, receptor for WNT2 that is coupled to the beta-catenin canonical signaling pathway, which leads to the activation of disheveled proteins, inhibition of GSK-3 kinase, nuclear accumulation of beta-catenin and activation of Wnt target genes. Plays a role in neuromuscular junction (NMJ) assembly by negatively regulating the clustering of acetylcholine receptors (AChR) through the beta-catenin canonical signaling pathway. May play a role in neural progenitor cells (NPCs) viability through the beta-catenin canonical signaling pathway by negatively regulating cell cycle arrest leading to inhibition of neuron apoptotic process. During hippocampal development, regulates neuroblast proliferation and apoptotic cell death. Controls bone formation through non canonical Wnt signaling mediated via ISG15. Positively regulates bone regeneration through non canonical Wnt signaling. This chain is Frizzled-9, found in Rattus norvegicus (Rat).